Consider the following 1374-residue polypeptide: Tripeptidyl-peptidase 2 (1374 aa).

The 497-residue stretch at 62–558 (ALLLNKTDTE…QGMIKIATAY (497 aa)) folds into the Peptidase S8 domain. Active-site charge relay system residues include D93, H314, and S499.

This sequence belongs to the peptidase S8 family. In terms of tissue distribution, expressed in intestinal fat-storing cells and some head neurons.

It carries out the reaction Release of an N-terminal tripeptide from a polypeptide.. Component of the proteolytic cascade acting downstream of the 26S proteasome in the ubiquitin-proteasome pathway. Has a role in regulation of fat storage. This chain is Tripeptidyl-peptidase 2 (tpp-2), found in Caenorhabditis elegans.